The chain runs to 166 residues: EndA-like protein (166 aa).

This sequence belongs to the tRNA-intron endonuclease family. Archaeal short subfamily.

This is EndA-like protein from Methanopyrus kandleri (strain AV19 / DSM 6324 / JCM 9639 / NBRC 100938).